A 621-amino-acid chain; its full sequence is Phytoene desaturase (621 aa).

Positions 1 to 23 (MPSTSKRPTAIVIGSGVGGVSTA) are cleaved as a signal peptide. Residues 394–425 (HASQAHQLSASRNGHISSASPPDQPGLTPTEK) are disordered. Residues 397–414 (QAHQLSASRNGHISSASP) are compositionally biased toward polar residues. Residues 598–618 (WEQWVSVLIYLLVGIFAWLWM) form a helical membrane-spanning segment.

Belongs to the carotenoid/retinoid oxidoreductase family. NAD(+) serves as cofactor.

Its subcellular location is the membrane. It carries out the reaction 15-cis-phytoene + 5 A = all-trans-3,4-didehydrolycopene + 5 AH2. It participates in carotenoid biosynthesis; lycopene biosynthesis. Its function is as follows. Phytoene desaturase involved in the carotenoid biosynthesis pathway. Converts phytoene into 3,4-didehydrolycopene via the intermediary of phytofluene, zeta-carotene, neurosporene and lycopene, by introducing up to five double bonds into phytoene. In Cercospora nicotianae (Barn spot disease fungus), this protein is Phytoene desaturase (PDH1).